The chain runs to 143 residues: Ribosome-binding factor A (143 aa).

Over residues 119-129 (AVGDKPAVPRD) the composition is skewed to basic and acidic residues. Residues 119–143 (AVGDKPAVPRDDNDDPVSDNPERDA) form a disordered region.

It belongs to the RbfA family. In terms of assembly, monomer. Binds 30S ribosomal subunits, but not 50S ribosomal subunits or 70S ribosomes.

It localises to the cytoplasm. Functionally, one of several proteins that assist in the late maturation steps of the functional core of the 30S ribosomal subunit. Associates with free 30S ribosomal subunits (but not with 30S subunits that are part of 70S ribosomes or polysomes). Required for efficient processing of 16S rRNA. May interact with the 5'-terminal helix region of 16S rRNA. The chain is Ribosome-binding factor A from Marinobacter nauticus (strain ATCC 700491 / DSM 11845 / VT8) (Marinobacter aquaeolei).